The following is a 174-amino-acid chain: CDP-archaeol synthase (174 aa).

Helical transmembrane passes span 14-34 (ILEAIILMLPAMIANATPVVA), 59-79 (IEGLLAGFAAGSAAGVLAALA), 83-103 (MLLAVHSPAIALGALAGDMAG), 118-138 (APLLDQLDFYLGALAVSIALG), and 149-169 (AAAAVLLLHLAANITAYLLGL).

Belongs to the CDP-archaeol synthase family. Mg(2+) serves as cofactor.

The protein localises to the cell membrane. It carries out the reaction 2,3-bis-O-(geranylgeranyl)-sn-glycerol 1-phosphate + CTP + H(+) = CDP-2,3-bis-O-(geranylgeranyl)-sn-glycerol + diphosphate. Its pathway is membrane lipid metabolism; glycerophospholipid metabolism. Its function is as follows. Catalyzes the formation of CDP-2,3-bis-(O-geranylgeranyl)-sn-glycerol (CDP-archaeol) from 2,3-bis-(O-geranylgeranyl)-sn-glycerol 1-phosphate (DGGGP) and CTP. This reaction is the third ether-bond-formation step in the biosynthesis of archaeal membrane lipids. The sequence is that of CDP-archaeol synthase from Aeropyrum pernix (strain ATCC 700893 / DSM 11879 / JCM 9820 / NBRC 100138 / K1).